The primary structure comprises 199 residues: Probable adenine phosphoribosyltransferase (199 aa).

It belongs to the purine/pyrimidine phosphoribosyltransferase family. As to quaternary structure, homodimer.

The protein resides in the cytoplasm. The enzyme catalyses AMP + diphosphate = 5-phospho-alpha-D-ribose 1-diphosphate + adenine. Its pathway is purine metabolism; AMP biosynthesis via salvage pathway; AMP from adenine: step 1/1. Functionally, catalyzes a salvage reaction resulting in the formation of AMP, that is energically less costly than de novo synthesis. The sequence is that of Probable adenine phosphoribosyltransferase (aprt) from Dictyostelium discoideum (Social amoeba).